A 637-amino-acid polypeptide reads, in one-letter code: Early transcription factor 70 kDa subunit (637 aa).

The Helicase ATP-binding domain maps to 32–185 (RTIIDENRSV…GHIIDLMSEE (154 aa)). 45-52 (HIMGSGKT) contributes to the ATP binding site. The DEXH box motif lies at 135–138 (DEAH). One can recognise a Helicase C-terminal domain in the interval 327-507 (KFKYFINRIQ…VLPFDIKKLL (181 aa)).

Belongs to the helicase family. VETF subfamily. In terms of assembly, heterodimer of a 70 kDa and a 82 kDa subunit. Part of the early transcription complex composed of ETF, RAP94/OPG109, and the DNA-directed RNA polymerase.

It localises to the virion. Functionally, acts with RNA polymerase to initiate transcription from early gene promoters. Is recruited by the RPO-associated protein of 94 kDa RAP94/OPG109 to form the early transcription complex, which also contains the core RNA polymerase. ETF heterodimer binds to early gene promoters. This chain is Early transcription factor 70 kDa subunit (OPG118), found in Homo sapiens (Human).